Consider the following 349-residue polypeptide: MDDLENIIFNSVEEEIIYWKSVAMKYKQCSEEAQQELQEFQEASREYEAELEAQLQQTEGRNRDIFSENNRLRMELDSIKEKYEEQHSENYIQISTLEGDLSTTKAVRDQLQKYIRELEQANDDLERAKRATIMSLEDFEQRLNQAIERNAFLESELDEKENVLESVQRLKDEARDLRQELAVQQKQEKPKSNMVSPETERMDTSVQASIAIPLAPLTPLSQRGCASTLNSPLSFKTSWDDGYSGTPLTPCARISALNIVGDLLRKVGALESKLASCRNFVHEQSPNRPLTSVSARMNKTREGIENRLSIASGSSVEKGLIKRLEFGSLPSNTPMQGMRSPQGVVKIII.

Positions 22 to 189 form a coiled coil; that stretch reads VAMKYKQCSE…ELAVQQKQEK (168 aa).

Belongs to the nudE family. Self-associates. Interacts with pafah1b1. Phosphorylated in mitosis.

It localises to the cytoplasm. It is found in the cytoskeleton. The protein resides in the microtubule organizing center. The protein localises to the centrosome. Its subcellular location is the spindle. It localises to the chromosome. It is found in the centromere. The protein resides in the kinetochore. The protein localises to the cleavage furrow. Its subcellular location is the cytoplasmic vesicle membrane. Its function is as follows. Required for centrosome duplication and formation and function of the mitotic spindle. In Xenopus laevis (African clawed frog), this protein is Nuclear distribution protein nudE homolog 1-B (nde1-b).